Reading from the N-terminus, the 247-residue chain is Carboxy-S-adenosyl-L-methionine synthase (247 aa).

S-adenosyl-L-methionine-binding positions include Tyr-40, 65–67 (GSS), 90–91 (DN), 122–123 (DI), Asn-137, and Arg-204.

It belongs to the class I-like SAM-binding methyltransferase superfamily. Cx-SAM synthase family. As to quaternary structure, homodimer.

The enzyme catalyses prephenate + S-adenosyl-L-methionine = carboxy-S-adenosyl-L-methionine + 3-phenylpyruvate + H2O. In terms of biological role, catalyzes the conversion of S-adenosyl-L-methionine (SAM) to carboxy-S-adenosyl-L-methionine (Cx-SAM). This chain is Carboxy-S-adenosyl-L-methionine synthase, found in Pseudomonas fluorescens (strain SBW25).